The primary structure comprises 467 residues: Glutamate--tRNA ligase (467 aa).

The 'HIGH' region signature appears at Pro9 to Gly19. Positions Lys237–Arg241 match the 'KMSKS' region motif. Lys240 contacts ATP.

Belongs to the class-I aminoacyl-tRNA synthetase family. Glutamate--tRNA ligase type 1 subfamily. In terms of assembly, monomer.

Its subcellular location is the cytoplasm. The catalysed reaction is tRNA(Glu) + L-glutamate + ATP = L-glutamyl-tRNA(Glu) + AMP + diphosphate. Functionally, catalyzes the attachment of glutamate to tRNA(Glu) in a two-step reaction: glutamate is first activated by ATP to form Glu-AMP and then transferred to the acceptor end of tRNA(Glu). The polypeptide is Glutamate--tRNA ligase (Stenotrophomonas maltophilia (strain R551-3)).